The chain runs to 677 residues: Methionine--tRNA ligase (677 aa).

Residues 15 to 25 carry the 'HIGH' region motif; that stretch reads PYANGSIHLGH. Positions 146, 149, 159, and 162 each coordinate Zn(2+). Positions 333 to 337 match the 'KMSKS' region motif; that stretch reads KMSKS. Lys-336 lines the ATP pocket. The tRNA-binding domain maps to 575 to 677; it reads DFAKVDLRVA…DGAKPGQQVK (103 aa).

Belongs to the class-I aminoacyl-tRNA synthetase family. MetG type 1 subfamily. As to quaternary structure, homodimer. Requires Zn(2+) as cofactor.

The protein localises to the cytoplasm. It catalyses the reaction tRNA(Met) + L-methionine + ATP = L-methionyl-tRNA(Met) + AMP + diphosphate. Is required not only for elongation of protein synthesis but also for the initiation of all mRNA translation through initiator tRNA(fMet) aminoacylation. This Klebsiella pneumoniae subsp. pneumoniae (strain ATCC 700721 / MGH 78578) protein is Methionine--tRNA ligase.